A 144-amino-acid chain; its full sequence is Large ribosomal subunit protein uL16 (144 aa).

Belongs to the universal ribosomal protein uL16 family. In terms of assembly, part of the 50S ribosomal subunit.

Binds 23S rRNA and is also seen to make contacts with the A and possibly P site tRNAs. This chain is Large ribosomal subunit protein uL16, found in Oceanobacillus iheyensis (strain DSM 14371 / CIP 107618 / JCM 11309 / KCTC 3954 / HTE831).